The following is a 219-amino-acid chain: Large ribosomal subunit protein uL4c (219 aa).

The tract at residues 53 to 81 is disordered; that stretch reads REHTASTKTKSQVRGGGKKPWKQKGTGRA. Over residues 68-79 the composition is skewed to basic residues; that stretch reads GGKKPWKQKGTG.

This sequence belongs to the universal ribosomal protein uL4 family. Part of the 50S ribosomal subunit.

It is found in the plastid. Its subcellular location is the chloroplast. Probably binds the 23S rRNA. The chain is Large ribosomal subunit protein uL4c (rpl4) from Cyanidium caldarium (Red alga).